We begin with the raw amino-acid sequence, 425 residues long: Enolase (425 aa).

Gln-165 serves as a coordination point for (2R)-2-phosphoglycerate. Glu-207 (proton donor) is an active-site residue. Positions 244, 285, and 312 each coordinate Mg(2+). Residues Lys-337, Arg-366, Ser-367, and Lys-388 each coordinate (2R)-2-phosphoglycerate. The active-site Proton acceptor is the Lys-337.

Belongs to the enolase family. It depends on Mg(2+) as a cofactor.

The protein resides in the cytoplasm. It localises to the secreted. It is found in the cell surface. The enzyme catalyses (2R)-2-phosphoglycerate = phosphoenolpyruvate + H2O. Its pathway is carbohydrate degradation; glycolysis; pyruvate from D-glyceraldehyde 3-phosphate: step 4/5. Its function is as follows. Catalyzes the reversible conversion of 2-phosphoglycerate (2-PG) into phosphoenolpyruvate (PEP). It is essential for the degradation of carbohydrates via glycolysis. The polypeptide is Enolase (Wolbachia sp. subsp. Brugia malayi (strain TRS)).